We begin with the raw amino-acid sequence, 267 residues long: Acyl-[acyl-carrier-protein]--UDP-N-acetylglucosamine O-acyltransferase (267 aa).

This sequence belongs to the transferase hexapeptide repeat family. LpxA subfamily. In terms of assembly, homotrimer.

It localises to the cytoplasm. The catalysed reaction is a (3R)-hydroxyacyl-[ACP] + UDP-N-acetyl-alpha-D-glucosamine = a UDP-3-O-[(3R)-3-hydroxyacyl]-N-acetyl-alpha-D-glucosamine + holo-[ACP]. It functions in the pathway glycolipid biosynthesis; lipid IV(A) biosynthesis; lipid IV(A) from (3R)-3-hydroxytetradecanoyl-[acyl-carrier-protein] and UDP-N-acetyl-alpha-D-glucosamine: step 1/6. In terms of biological role, involved in the biosynthesis of lipid A, a phosphorylated glycolipid that anchors the lipopolysaccharide to the outer membrane of the cell. The sequence is that of Acyl-[acyl-carrier-protein]--UDP-N-acetylglucosamine O-acyltransferase from Cupriavidus necator (strain ATCC 17699 / DSM 428 / KCTC 22496 / NCIMB 10442 / H16 / Stanier 337) (Ralstonia eutropha).